The following is a 577-amino-acid chain: Sulfite reductase [NADPH] hemoprotein beta-component (577 aa).

The [4Fe-4S] cluster site is built by Cys436, Cys442, Cys481, and Cys485. Cys485 is a binding site for siroheme.

Belongs to the nitrite and sulfite reductase 4Fe-4S domain family. Alpha(8)-beta(8). The alpha component is a flavoprotein, the beta component is a hemoprotein. Siroheme serves as cofactor. [4Fe-4S] cluster is required as a cofactor.

The enzyme catalyses hydrogen sulfide + 3 NADP(+) + 3 H2O = sulfite + 3 NADPH + 4 H(+). Its pathway is sulfur metabolism; hydrogen sulfide biosynthesis; hydrogen sulfide from sulfite (NADPH route): step 1/1. Component of the sulfite reductase complex that catalyzes the 6-electron reduction of sulfite to sulfide. This is one of several activities required for the biosynthesis of L-cysteine from sulfate. The chain is Sulfite reductase [NADPH] hemoprotein beta-component from Shewanella woodyi (strain ATCC 51908 / MS32).